The chain runs to 217 residues: Large ribosomal subunit protein uL3 (217 aa).

The span at 134–146 (GRATHGNSRSHNV) shows a compositional bias: polar residues. The tract at residues 134 to 154 (GRATHGNSRSHNVPGSIGMAQ) is disordered. N5-methylglutamine is present on Q154.

Belongs to the universal ribosomal protein uL3 family. In terms of assembly, part of the 50S ribosomal subunit. Forms a cluster with proteins L14 and L19. Post-translationally, methylated by PrmB.

In terms of biological role, one of the primary rRNA binding proteins, it binds directly near the 3'-end of the 23S rRNA, where it nucleates assembly of the 50S subunit. The chain is Large ribosomal subunit protein uL3 from Burkholderia lata (strain ATCC 17760 / DSM 23089 / LMG 22485 / NCIMB 9086 / R18194 / 383).